Reading from the N-terminus, the 459-residue chain is UDP-N-acetylmuramoylalanine--D-glutamate ligase (459 aa).

Residue 119–125 (GTNGKTT) coordinates ATP.

It belongs to the MurCDEF family.

It is found in the cytoplasm. The catalysed reaction is UDP-N-acetyl-alpha-D-muramoyl-L-alanine + D-glutamate + ATP = UDP-N-acetyl-alpha-D-muramoyl-L-alanyl-D-glutamate + ADP + phosphate + H(+). It functions in the pathway cell wall biogenesis; peptidoglycan biosynthesis. Its function is as follows. Cell wall formation. Catalyzes the addition of glutamate to the nucleotide precursor UDP-N-acetylmuramoyl-L-alanine (UMA). The sequence is that of UDP-N-acetylmuramoylalanine--D-glutamate ligase from Lacticaseibacillus paracasei (strain ATCC 334 / BCRC 17002 / CCUG 31169 / CIP 107868 / KCTC 3260 / NRRL B-441) (Lactobacillus paracasei).